Reading from the N-terminus, the 395-residue chain is Acetate kinase (395 aa).

A Mg(2+)-binding site is contributed by Asn-8. Lys-15 serves as a coordination point for ATP. A substrate-binding site is contributed by Arg-89. Asp-146 serves as the catalytic Proton donor/acceptor. Residues 206–210 (HLGNG), 281–283 (DLR), and 329–333 (GIGEN) each bind ATP. Position 382 (Glu-382) interacts with Mg(2+).

The protein belongs to the acetokinase family. Homodimer. Mg(2+) is required as a cofactor. The cofactor is Mn(2+).

The protein resides in the cytoplasm. It catalyses the reaction acetate + ATP = acetyl phosphate + ADP. It participates in metabolic intermediate biosynthesis; acetyl-CoA biosynthesis; acetyl-CoA from acetate: step 1/2. Its activity is regulated as follows. Induced by glucose excess, the induction may be mediated by CcpA transcriptional regulator. Functionally, catalyzes the formation of acetyl phosphate from acetate and ATP. Can also catalyze the reverse reaction. Appears to favor the formation of acetate. Involved in the secretion of excess carbohydrate. In Bacillus subtilis (strain 168), this protein is Acetate kinase.